The sequence spans 485 residues: NADH-quinone oxidoreductase subunit N (485 aa).

The next 14 helical transmembrane spans lie at 8-28 (LIAL…MLSI), 35-55 (FLNA…LWFV), 71-91 (GFAM…CTFA), 105-125 (FYLL…ANHL), 127-147 (TLFL…GYAF), 159-179 (YTIL…LVYA), 203-223 (LLAG…LVPF), 235-255 (PAPV…GVVM), 271-291 (VVLG…ALSQ), 297-317 (LLGY…IALQ), 326-346 (VGVY…VVSL), 373-393 (AAVM…LGFI), 408-430 (WWLV…RVAV), and 455-475 (IVVL…QPLI).

It belongs to the complex I subunit 2 family. In terms of assembly, NDH-1 is composed of 13 different subunits. Subunits NuoA, H, J, K, L, M, N constitute the membrane sector of the complex.

It is found in the cell inner membrane. It carries out the reaction a quinone + NADH + 5 H(+)(in) = a quinol + NAD(+) + 4 H(+)(out). Its function is as follows. NDH-1 shuttles electrons from NADH, via FMN and iron-sulfur (Fe-S) centers, to quinones in the respiratory chain. The immediate electron acceptor for the enzyme in this species is believed to be ubiquinone. Couples the redox reaction to proton translocation (for every two electrons transferred, four hydrogen ions are translocated across the cytoplasmic membrane), and thus conserves the redox energy in a proton gradient. The polypeptide is NADH-quinone oxidoreductase subunit N (Salmonella paratyphi A (strain ATCC 9150 / SARB42)).